The following is a 336-amino-acid chain: MVPKVGINGFGRIGRVVLRNALETGAVEVVALNDPFIEPHYAEYMFKYDSTHGRFKGDIKVDGKDLVIDGKRIKFYQERDPANIPWKDSGAEYIVESTGVFTTTEKASAHFKGGAKKVIISAPSADAPMYVMGVNEDTYAGANVISNASCTTNCLAPLAKTLNDKFTIVEGLMTAIHAYTASQKTVDGPSSKDWRGGRAAAQNLIPSSTGAAKAVGKVIPELAGKVTGMSVRVPTVNVSLVDFTVRFAKDVTYDEVKAAIKEASEGPLKGILAYTEDDIVSTDILTDPHSSTFDAKAGIALNKNFVKVMSWYDNEYGYSRRVVDLIVYVSKKDAGQ.

NAD(+)-binding positions include 12-13, Asp-34, and Arg-79; that span reads RI. D-glyceraldehyde 3-phosphate contacts are provided by residues 149–151, Thr-180, 209–210, and Arg-232; these read SCT and TG. The active-site Nucleophile is the Cys-150. Residue Asn-314 participates in NAD(+) binding.

Belongs to the glyceraldehyde-3-phosphate dehydrogenase family. Homotetramer.

Its subcellular location is the cytoplasm. The catalysed reaction is D-glyceraldehyde 3-phosphate + phosphate + NAD(+) = (2R)-3-phospho-glyceroyl phosphate + NADH + H(+). It participates in carbohydrate degradation; glycolysis; pyruvate from D-glyceraldehyde 3-phosphate: step 1/5. Inhibited by koningic acid through the interaction of cysteine residues with koningic acid even at very low concentrations. This is Glyceraldehyde-3-phosphate dehydrogenase 1 (gpd1) from Trichoderma koningii (Hypocrea koningii).